Here is a 909-residue protein sequence, read N- to C-terminus: Disintegrin and metalloproteinase domain-containing protein 12 (909 aa).

The signal sequence occupies residues 1–28 (MAARPLPVSPARALLLALAGALLAPCEA). The propeptide occupies 29 to 207 (RGVSLWNQGR…SQTWARRHKR (179 aa)). Asparagine 111 and asparagine 149 each carry an N-linked (GlcNAc...) asparagine glycan. The Cysteine switch signature appears at 177-184 (GSCGSHHN). Zn(2+) contacts are provided by cysteine 179 and histidine 350. The Extracellular portion of the chain corresponds to 208 to 708 (ETLKATKYVE…GPIRQADNQG (501 aa)). A Peptidase M12B domain is found at 214 to 416 (KYVELVIVAD…GMGVCLFNLP (203 aa)). 3 cysteine pairs are disulfide-bonded: cysteine 325/cysteine 411, cysteine 367/cysteine 395, and cysteine 369/cysteine 378. Residue glutamate 351 is part of the active site. The Zn(2+) site is built by histidine 354 and histidine 360. Asparagine 381 and asparagine 452 each carry an N-linked (GlcNAc...) asparagine glycan. The Disintegrin domain occupies 424 to 510 (GQKCGNRFVE…HCPANVYLHD (87 aa)). Residues cysteine 482 and cysteine 502 are joined by a disulfide bond. The N-linked (GlcNAc...) asparagine glycan is linked to asparagine 651. The EGF-like domain occupies 656–688 (GVHECAMQCHGRGVCNNRKNCHCEAHWAPPFCD). Intrachain disulfides connect cysteine 660–cysteine 670, cysteine 664–cysteine 676, and cysteine 678–cysteine 687. A helical transmembrane segment spans residues 709-729 (LTIGILVTILCLLAAGFVVYL). Over 730–909 (KRKTLIRLLF…PRSTHTAYIK (180 aa)) the chain is Cytoplasmic. Residues 822 to 862 (LHRAPRAPSVPARPLPAKPALRQAQGTCKPNPPQKPLPADP) form a disordered region. Residues 828-834 (APSVPAR) carry the SH3-binding; class II motif. The SH3-binding; class I signature appears at 834–841 (RPLPAKPA). The span at 851–860 (PNPPQKPLPA) shows a compositional bias: pro residues. Residues 885 to 891 (RLAPLRP) carry the SH3-binding; class I motif. Residue tyrosine 907 is modified to Phosphotyrosine; by SRC.

In terms of assembly, interacts with alpha-actinin-2 and with syndecans. Interacts with SH3PXD2A. Interacts with FST3. Interacts with RACK1; the interaction is required for PKC-dependent translocation of ADAM12 to the cell membrane. Zn(2+) serves as cofactor. Post-translationally, the precursor is cleaved by a furin endopeptidase. Isoform 1 is expressed in placenta and skeletal, cardiac, and smooth muscle. Isoform 2 seems to be expressed only in placenta or in embryo and fetus. Both forms were expressed in some tumor cells lines. Not detected in brain, lung, liver, kidney or pancreas.

The protein resides in the cell membrane. Its subcellular location is the secreted. Involved in skeletal muscle regeneration, specifically at the onset of cell fusion. Also involved in macrophage-derived giant cells (MGC) and osteoclast formation from mononuclear precursors. The sequence is that of Disintegrin and metalloproteinase domain-containing protein 12 (ADAM12) from Homo sapiens (Human).